A 732-amino-acid polypeptide reads, in one-letter code: MIEDDGMLLNFSTDTTEDNNDSKFNSGKVTGGRWKERRKLKMMMEGREPVKRKTFEELENSDMDTNKKPKSDSSGRKSYNQQSNNESVKDVVRPVVSKVNPSQVNTQIVSSLFTAARQVETSVNINEHDDKEEINPSNAPLAADNFDSLKIEQQLVNHLNEKMRIQKPTSIQKLVLPQLLSSKNNDLFIHAQTGSGKTLAFALPILSKILSMKTRVDRKSGCFAIFITPTRELATQIYHVLSELTNCCHYLVPCLLIGGESKKSEKARLRKGCNFIIGTPGRILDHFQNTQSVKEQLAVSLRYVVLDEADKLMELGFEETLTDILKLIHDISLNTSVYPQLPSRIMHILCSATSKGSVTKLGNVALQNYKMISNSHVTNELENATVPDQLLQKIAIVPPKLRLVTLAATLDSIHRKHIEQKKKKLDYVSRTVVFLSCSDSVNFHFEAFSSSDANHRNLVGESARLLTKGNDILPSFDPENDPDFICYKLHGSLSQQIRSSTLQHFSKTNENVKGKHLVLFCTDVASRGLDLPEIGTVIELDPPFAVEDHLHRIGRTARAGKHGESLLFLLPGEEEGYMEYIKPYHTKGWKLVNYTNDLLKPSFQNVNVKRSDKETSKNVEEWDTNATTWHLNVERRVLEDSSFKDIAMKGYASHIRAYATHISKEKKFFNVKCLHLGHLAKSFALRERPKTMGLQNTKNGGEAKKNSKESAKNKMFRLARMAVKQSSGEFNY.

Positions 1–91 (MIEDDGMLLN…QSNNESVKDV (91 aa)) are disordered. Basic and acidic residues-rich tracts occupy residues 42 to 56 (MMME…KTFE) and 64 to 75 (DTNKKPKSDSSG). Over residues 76–86 (RKSYNQQSNNE) the composition is skewed to polar residues. The Q motif signature appears at 144 to 173 (DNFDSLKIEQQLVNHLNEKMRIQKPTSIQK). The 195-residue stretch at 178-372 (QLLSSKNNDL…NVALQNYKMI (195 aa)) folds into the Helicase ATP-binding domain. 191–198 (AQTGSGKT) serves as a coordination point for ATP. The DEAD box signature appears at 307 to 310 (DEAD). The 180-residue stretch at 420–599 (QKKKKLDYVS…KLVNYTNDLL (180 aa)) folds into the Helicase C-terminal domain. A disordered region spans residues 692–711 (MGLQNTKNGGEAKKNSKESA). The segment covering 701–711 (GEAKKNSKESA) has biased composition (basic and acidic residues).

The protein belongs to the DEAD box helicase family. DDX31/DBP7 subfamily.

Its subcellular location is the nucleus. The protein localises to the nucleolus. It carries out the reaction ATP + H2O = ADP + phosphate + H(+). Functionally, ATP-binding RNA helicase involved in the biogenesis of 60S ribosomal subunits and is required for the normal formation of 25S and 5.8S rRNAs. The chain is ATP-dependent RNA helicase DBP7 (DBP7) from Vanderwaltozyma polyspora (strain ATCC 22028 / DSM 70294 / BCRC 21397 / CBS 2163 / NBRC 10782 / NRRL Y-8283 / UCD 57-17) (Kluyveromyces polysporus).